A 76-amino-acid chain; its full sequence is ATP synthase subunit 9, mitochondrial (76 aa).

Position 1 is an N-formylmethionine (Met-1). The next 2 membrane-spanning stretches (helical) occupy residues 14 to 34 (IATI…AALI) and 52 to 72 (ILGF…SFLL).

As to quaternary structure, F-type ATP synthases have 2 components, the catalytic core F(1) and the membrane-embedded component F(0), linked together by a central stalk and a peripheral stalk. The central stalk, also called rotor shaft, is often seen as part of F(1). The peripheral stalk is seen as part of F(0). F(0) contains the membrane channel next to the rotor. F-type ATP synthases form dimers but each monomer functions independently in ATP generation. The dimer consists of 18 different polypeptides: ATP1 (subunit alpha, part of F(1), 3 molecules per monomer), ATP2 (subunit beta, part of F(1), 3 molecules per monomer), ATP3 (subunit gamma, part of the central stalk), ATP4 (subunit b, part of the peripheral stalk), ATP5/OSCP (subunit 5/OSCP, part of the peripheral stalk), ATP6 (subunit a, part of the peripheral stalk), ATP7 (subunit d, part of the peripheral stalk), ATP8 (subunit 8, part of the peripheral stalk), OLI1 (subunit c, part of the rotor, 10 molecules per monomer), ATP14 (subunit h, part of the peripheral stalk), ATP15 (subunit epsilon, part of the central stalk), ATP16 (subunit delta, part of the central stalk), ATP17 (subunit f, part of the peripheral stalk), ATP18 (subunit i/j, part of the peripheral stalk). Dimer-specific subunits are ATP19 (subunit k, at interface between monomers), ATP20 (subunit g, at interface between monomers), TIM11 (subunit e, at interface between monomers). Also contains subunit L.

It is found in the mitochondrion inner membrane. Mitochondrial membrane ATP synthase (F(1)F(0) ATP synthase or Complex V) produces ATP from ADP in the presence of a proton gradient across the membrane which is generated by electron transport complexes of the respiratory chain. F-type ATP synthases consist of two structural domains, F(1) - containing the extramembraneous catalytic core, and F(0) - containing the membrane proton channel, linked together by a central stalk and a peripheral stalk. During catalysis, ATP synthesis in the catalytic domain of F(1) is coupled via a rotary mechanism of the central stalk subunits to proton translocation. Part of the complex F(0) domain. A homomeric c-ring of 10 OLI1/ATP9 subunits is part of the complex rotary element. This Pichia angusta (Yeast) protein is ATP synthase subunit 9, mitochondrial.